A 186-amino-acid polypeptide reads, in one-letter code: Small ribosomal subunit protein uS7 (186 aa).

The protein belongs to the universal ribosomal protein uS7 family. As to quaternary structure, part of the 30S ribosomal subunit.

Functionally, one of the primary rRNA binding proteins, it binds directly to 16S rRNA where it nucleates assembly of the head domain of the 30S subunit. Is located at the subunit interface close to the decoding center. The chain is Small ribosomal subunit protein uS7 from Methanothermobacter thermautotrophicus (strain ATCC 29096 / DSM 1053 / JCM 10044 / NBRC 100330 / Delta H) (Methanobacterium thermoautotrophicum).